Here is a 428-residue protein sequence, read N- to C-terminus: Serine--tRNA ligase (428 aa).

Position 231–233 (231–233 (TAE)) interacts with L-serine. ATP is bound at residue 262–264 (RSE). Glu285 contacts L-serine. 349–352 (EISS) is a binding site for ATP. Ser385 lines the L-serine pocket.

The protein belongs to the class-II aminoacyl-tRNA synthetase family. Type-1 seryl-tRNA synthetase subfamily. In terms of assembly, homodimer. The tRNA molecule binds across the dimer.

The protein localises to the cytoplasm. The catalysed reaction is tRNA(Ser) + L-serine + ATP = L-seryl-tRNA(Ser) + AMP + diphosphate + H(+). It catalyses the reaction tRNA(Sec) + L-serine + ATP = L-seryl-tRNA(Sec) + AMP + diphosphate + H(+). It functions in the pathway aminoacyl-tRNA biosynthesis; selenocysteinyl-tRNA(Sec) biosynthesis; L-seryl-tRNA(Sec) from L-serine and tRNA(Sec): step 1/1. Functionally, catalyzes the attachment of serine to tRNA(Ser). Is also able to aminoacylate tRNA(Sec) with serine, to form the misacylated tRNA L-seryl-tRNA(Sec), which will be further converted into selenocysteinyl-tRNA(Sec). In Staphylococcus aureus (strain USA300), this protein is Serine--tRNA ligase.